A 1028-amino-acid polypeptide reads, in one-letter code: Serine/threonine-protein kinase fray2 (1028 aa).

The segment at 1–67 (MSDDKYHHDK…PKPRKNYPNS (67 aa)) is disordered. Positions 20–54 (KQSTAAALSSSSTLASSSSMTTTTTTTSTTTTAAS) are enriched in low complexity. Positions 71–330 (YELKETIGKG…PSKLLEHRFF (260 aa)) constitute a Protein kinase domain. ATP-binding positions include 77–85 (IGKGGSGLV) and Lys-100. The active-site Proton acceptor is Asp-195. The residue at position 230 (Thr-230) is a Phosphothreonine; by autocatalysis. Polar residues predominate over residues 368 to 381 (TSSPQFDTGHSNSA). 3 disordered regions span residues 368 to 467 (TSSP…STVV), 486 to 561 (AYHQ…LQQP), and 580 to 914 (DLIT…IQSK). 2 stretches are compositionally biased toward low complexity: residues 387–419 (PNEN…NNNN) and 432–458 (TPSH…SNHT). Polar residues-rich tracts occupy residues 503 to 518 (IPNH…SAHS) and 528 to 542 (IHPT…VVNN). Residues 543–561 (TQQPQTLQPPQQQHQLQQP) show a composition bias toward low complexity. Residues 595–616 (IPSSSSHGNIPSLVTTSPKSPL) show a composition bias toward polar residues. Composition is skewed to low complexity over residues 617–642 (QHQQ…ISSN) and 683–700 (SSRA…SHTS). Basic and acidic residues-rich tracts occupy residues 701–714 (SSDE…SDRK), 728–742 (SKRD…DRSN), 753–855 (VSRD…DRSR), and 865–893 (SRDS…DYKS).

Belongs to the protein kinase superfamily. STE Ser/Thr protein kinase family. STE20 subfamily. Mn(2+) is required as a cofactor. Undergoes autophosphorylation in the catalytic domain.

The catalysed reaction is L-seryl-[protein] + ATP = O-phospho-L-seryl-[protein] + ADP + H(+). The enzyme catalyses L-threonyl-[protein] + ATP = O-phospho-L-threonyl-[protein] + ADP + H(+). This is Serine/threonine-protein kinase fray2 from Dictyostelium discoideum (Social amoeba).